Reading from the N-terminus, the 374-residue chain is Tetraacyldisaccharide 4'-kinase (374 aa).

66-73 (TAGGTGKT) provides a ligand contact to ATP.

This sequence belongs to the LpxK family.

It catalyses the reaction a lipid A disaccharide + ATP = a lipid IVA + ADP + H(+). Its pathway is glycolipid biosynthesis; lipid IV(A) biosynthesis; lipid IV(A) from (3R)-3-hydroxytetradecanoyl-[acyl-carrier-protein] and UDP-N-acetyl-alpha-D-glucosamine: step 6/6. Functionally, transfers the gamma-phosphate of ATP to the 4'-position of a tetraacyldisaccharide 1-phosphate intermediate (termed DS-1-P) to form tetraacyldisaccharide 1,4'-bis-phosphate (lipid IVA). The protein is Tetraacyldisaccharide 4'-kinase of Syntrophus aciditrophicus (strain SB).